We begin with the raw amino-acid sequence, 884 residues long: Microsomal triglyceride transfer protein large subunit (884 aa).

Residues 1–21 form the signal peptide; that stretch reads MMPVAGLLLCVTAVLCTSALG. The 635-residue stretch at 26–660 folds into the Vitellogenin domain; the sequence is LDNGKLYRYS…QSNNALLHGL (635 aa). Residues C172 and C192 are joined by a disulfide bond. N-linked (GlcNAc...) asparagine glycosylation is present at N348. C438 and C443 form a disulfide bridge. A glycan (N-linked (GlcNAc...) asparagine) is linked at N787.

As to quaternary structure, heterodimer; heterodimerizes with the protein disulfide isomerase. As to expression, highest expression in the proximal part of the anterior intestine. Lower expression in the distal part of the anterior intestine, in the posterior portion of the intestinal tube and liver. Very low expression levels in heart, brain, ovary, testis and kidney.

The protein resides in the endoplasmic reticulum. The protein localises to the golgi apparatus. The catalysed reaction is a 1,2-diacyl-sn-glycero-3-phosphocholine(in) = a 1,2-diacyl-sn-glycero-3-phosphocholine(out). It carries out the reaction a 1,2-diacyl-sn-glycero-3-phosphoethanolamine(in) = a 1,2-diacyl-sn-glycero-3-phosphoethanolamine(out). The enzyme catalyses a cholesterol ester(in) = a cholesterol ester(out). It catalyses the reaction a triacyl-sn-glycerol(in) = a triacyl-sn-glycerol(out). Its activity is regulated as follows. Inhibited by naringenin. Its function is as follows. Catalyzes the transport of triglyceride between phospholipid surfaces. Catalyzes the transport of cholesteryl ester, and phospholipid between phospholipid surfaces. Required for the assembly and secretion of plasma lipoproteins that contain apolipoprotein B. Required for yolk lipid utilization and absorption of dietary lipids in larvae. This is Microsomal triglyceride transfer protein large subunit from Danio rerio (Zebrafish).